Reading from the N-terminus, the 354-residue chain is Uroporphyrinogen decarboxylase (354 aa).

Substrate contacts are provided by residues 27-31 (RRAGR), Phe-46, Asp-77, Tyr-154, Thr-209, and His-327.

It belongs to the uroporphyrinogen decarboxylase family. In terms of assembly, homodimer.

The protein localises to the cytoplasm. The catalysed reaction is uroporphyrinogen III + 4 H(+) = coproporphyrinogen III + 4 CO2. It participates in porphyrin-containing compound metabolism; protoporphyrin-IX biosynthesis; coproporphyrinogen-III from 5-aminolevulinate: step 4/4. Functionally, catalyzes the decarboxylation of four acetate groups of uroporphyrinogen-III to yield coproporphyrinogen-III. This chain is Uroporphyrinogen decarboxylase, found in Salmonella typhimurium (strain LT2 / SGSC1412 / ATCC 700720).